A 233-amino-acid polypeptide reads, in one-letter code: Small ribosomal subunit protein uS3 (233 aa).

The KH type-2 domain maps to 39 to 107 (VRQFLTKELS…PAQINTYEIR (69 aa)).

This sequence belongs to the universal ribosomal protein uS3 family. In terms of assembly, part of the 30S ribosomal subunit. Forms a tight complex with proteins S10 and S14.

Binds the lower part of the 30S subunit head. Binds mRNA in the 70S ribosome, positioning it for translation. This chain is Small ribosomal subunit protein uS3, found in Hamiltonella defensa subsp. Acyrthosiphon pisum (strain 5AT).